Reading from the N-terminus, the 167-residue chain is Protein-export protein SecB (167 aa).

This sequence belongs to the SecB family. As to quaternary structure, homotetramer, a dimer of dimers. One homotetramer interacts with 1 SecA dimer.

It localises to the cytoplasm. Its function is as follows. One of the proteins required for the normal export of preproteins out of the cell cytoplasm. It is a molecular chaperone that binds to a subset of precursor proteins, maintaining them in a translocation-competent state. It also specifically binds to its receptor SecA. This chain is Protein-export protein SecB, found in Wolbachia pipientis wMel.